Consider the following 1346-residue polypeptide: G-protein coupled receptor-associated sorting protein 1 (1346 aa).

Disordered stretches follow at residues Met1–Glu101, Thr144–Pro177, and Ala192–Thr258. The segment covering Glu21–Val36 has biased composition (low complexity). Residues Phe211–Met226 show a composition bias toward basic residues. Residue Ser295 is modified to Phosphoserine. Disordered stretches follow at residues Glu311–Glu399 and Val461–Met485. A compositionally biased stretch (basic residues) spans Arg316–Ala333. Composition is skewed to basic and acidic residues over residues Asp347–Ala361 and Lys370–Glu399. The span at Val461–Ser484 shows a compositional bias: polar residues. Ser619 and Ser626 each carry phosphoserine. The residue at position 860 (Thr860) is a Phosphothreonine. Ser862 is subject to Phosphoserine. The interval Ala984–Trp1004 is disordered. Residues Ser990–Ser1003 show a composition bias toward basic and acidic residues.

It belongs to the GPRASP family. Interacts with cytoplasmic tails of a variety of G-protein coupled receptors such as delta opioid receptor/OPRD1, beta-2 adrenergic receptor/ADRB2 and D4 dopamine receptor/DRD4. Interacts with BECN2; the interaction is direct and with D2 dopamine receptor/DRD2. Interacts with PER1. Expressed in the brain.

It is found in the cytoplasm. Its function is as follows. Modulates lysosomal sorting and functional down-regulation of a variety of G-protein coupled receptors. Targets receptors for degradation in lysosomes via its interaction with BECN2. The chain is G-protein coupled receptor-associated sorting protein 1 (Gprasp1) from Rattus norvegicus (Rat).